Here is a 213-residue protein sequence, read N- to C-terminus: Probable transaldolase (213 aa).

The active-site Schiff-base intermediate with substrate is Lys83.

Belongs to the transaldolase family. Type 3B subfamily.

Its subcellular location is the cytoplasm. The catalysed reaction is D-sedoheptulose 7-phosphate + D-glyceraldehyde 3-phosphate = D-erythrose 4-phosphate + beta-D-fructose 6-phosphate. The protein operates within carbohydrate degradation; pentose phosphate pathway; D-glyceraldehyde 3-phosphate and beta-D-fructose 6-phosphate from D-ribose 5-phosphate and D-xylulose 5-phosphate (non-oxidative stage): step 2/3. Its function is as follows. Transaldolase is important for the balance of metabolites in the pentose-phosphate pathway. The polypeptide is Probable transaldolase (Desulfitobacterium hafniense (strain DSM 10664 / DCB-2)).